Here is a 147-residue protein sequence, read N- to C-terminus: uncharacterized protein (147 aa).

The N-acetyltransferase domain maps to 1–147 (MEIRRADKDD…RPESGGSGSE (147 aa)).

This sequence belongs to the acetyltransferase family.

This is an uncharacterized protein from Archaeoglobus fulgidus (strain ATCC 49558 / DSM 4304 / JCM 9628 / NBRC 100126 / VC-16).